The chain runs to 256 residues: NAD-dependent protein deacylase 2 (256 aa).

Residues 1–256 form the Deacetylase sirtuin-type domain; sequence MDSHSPIATV…MPQVVSHIYR (256 aa). Residues 25 to 44 and 108 to 111 each bind NAD(+); these read GAGL…GGLY and QNID. Catalysis depends on H128, which acts as the Proton acceptor. Positions 136, 139, 158, and 161 each coordinate Zn(2+). NAD(+)-binding positions include 199–201, 225–227, and A243; these read GTT and NPG.

Belongs to the sirtuin family. Class III subfamily. It depends on Zn(2+) as a cofactor.

Its subcellular location is the cytoplasm. It carries out the reaction N(6)-acetyl-L-lysyl-[protein] + NAD(+) + H2O = 2''-O-acetyl-ADP-D-ribose + nicotinamide + L-lysyl-[protein]. Functionally, NAD-dependent protein deacetylase which modulates the activities of several proteins which are inactive in their acetylated form. The polypeptide is NAD-dependent protein deacylase 2 (cobB2) (Pseudomonas aeruginosa (strain ATCC 15692 / DSM 22644 / CIP 104116 / JCM 14847 / LMG 12228 / 1C / PRS 101 / PAO1)).